Consider the following 107-residue polypeptide: UPF0122 protein EAT1b_2891 (107 aa).

Belongs to the UPF0122 family.

Its function is as follows. Might take part in the signal recognition particle (SRP) pathway. This is inferred from the conservation of its genetic proximity to ftsY/ffh. May be a regulatory protein. This chain is UPF0122 protein EAT1b_2891, found in Exiguobacterium sp. (strain ATCC BAA-1283 / AT1b).